The sequence spans 637 residues: MLNITLPDGSVRQYESPVTVAQIAASIGAGLAKAAVAGRVNGKLVDACDPIVEDSAVQIITPKDQEGIEIIRHSCAHLVGHAVKQLYPNAKMVIGPVIEEGFYYDIATEKPFTPEDVAAIEARMKELIAQDYDVVKIMTPRAEAIKIFQERGEEYKLRLIDDMPEVEAMGMYHHQEYVDMCRGPHVPNTRFLKNFKLTKLAGAYWRGDSNNEMLQRIYGTAWATKDELKAYIQRIEEAEKRDHRKLGKQLDLFHLQDEAPGMVFWHPKGWALWQVIEQHMRKELNAAGYKEVKTPQIMDKTFWEKSGHWENYKDNMFVTSSEKREYAVKPMNCPGHVQIFNNGLRSYRDLPMRLAEFGSCHRNEPSGALHGLMRVRGFVQDDAHIFCTEDQIVSEARAFNELLVRIYKQFGFHDVSVKLSLRPEQRAGSDDVWDKAEQGLREALTACGVEWGELPGEGAFYGPKIEYHVRDALGRSWQCGTLQLDFVLPERLDAEYVTENNDRARPVMLHRAILGSLERFIGILIENHAGSFPLWLAPVQLVIMNITENQADYCREVAAKLQAAGFRVELDLRNEKIGYKIRDNSQYRFPYQIVVGDKEKQENKVAVRRKAEDLGSLDLDDFIAQLQQEITDALVNH.

Residues M1–T61 enclose the TGS domain. The tract at residues D242–P533 is catalytic. Positions 333, 384, and 510 each coordinate Zn(2+).

This sequence belongs to the class-II aminoacyl-tRNA synthetase family. Homodimer. It depends on Zn(2+) as a cofactor.

It is found in the cytoplasm. It catalyses the reaction tRNA(Thr) + L-threonine + ATP = L-threonyl-tRNA(Thr) + AMP + diphosphate + H(+). Functionally, catalyzes the attachment of threonine to tRNA(Thr) in a two-step reaction: L-threonine is first activated by ATP to form Thr-AMP and then transferred to the acceptor end of tRNA(Thr). Also edits incorrectly charged L-seryl-tRNA(Thr). The protein is Threonine--tRNA ligase of Neisseria meningitidis serogroup A / serotype 4A (strain DSM 15465 / Z2491).